Reading from the N-terminus, the 136-residue chain is Histone H3.3 (136 aa).

Residues 1–43 form a disordered region; the sequence is MARTKQTARKSTGGKAPRKQLATKAARKSAPSTGGVKKPHRYR. Lys-5 bears the N6,N6,N6-trimethyllysine; alternate mark. Position 5 is an N6,N6-dimethyllysine; alternate (Lys-5). N6-methyllysine; alternate is present on residues Lys-5 and Lys-10. An N6-acetyllysine; alternate modification is found at Lys-10. Ser-11 carries the post-translational modification Phosphoserine. Position 15 is an N6,N6-dimethyllysine; alternate (Lys-15). Lys-15, Lys-19, Lys-24, Lys-28, and Lys-37 each carry N6-acetyllysine; alternate. Residues Lys-19, Lys-24, Lys-28, and Lys-37 each carry the N6-methyllysine; alternate modification. N6,N6,N6-trimethyllysine; alternate occurs at positions 28 and 37. 2 positions are modified to N6,N6-dimethyllysine; alternate: Lys-28 and Lys-37. N6-acetyllysine is present on residues Lys-57 and Lys-65. Lys-80 carries the post-translational modification N6,N6,N6-trimethyllysine; alternate. The residue at position 80 (Lys-80) is an N6,N6-dimethyllysine; alternate. Lys-80 is modified (N6-methyllysine; alternate).

This sequence belongs to the histone H3 family. In terms of assembly, the nucleosome is a histone octamer containing two molecules each of H2A, H2B, H3 and H4 assembled in one H3-H4 heterotetramer and two H2A-H2B heterodimers. The octamer wraps approximately 147 bp of DNA. In terms of processing, phosphorylated at Ser-11. This is required for transcriptional activation through TBP recruitment to the promoters. Phosphorylation at Ser-11 also promotes subsequent acetylation at Lys-15. Post-translationally, mono-, di- and trimethylation of Lys-5 by the COMPASS complex activates gene expression by regulating transcription elongation and plays a role in telomere length maintenance. Lys-5 methylation enrichment correlates with transcription levels, and occurs in a 5' to 3' gradient with tri-methyl enrichment at the 5'-end of genes, shifting to di-methyl and then mono-methyl. The COMPASS mediated di and trimethylation of Lys-5 requires histone H2B monoubiquitination. Methylation of Lys-37 by SET2 represses gene expression. Methylation of Lys-80 by DOT1 is required for association of SIR proteins with telomeric regions and for telomeric silencing. Acetylation of histone H3 leads to transcriptional activation. Acetylation at Lys-15 is promoted by the phosphorylation at Ser-11. Acetylation at Lys-57 occurs predominantly in newly synthesized H3 molecule during G1, S and G2/M of the cell cycle and may be involved in DNA repair.

It is found in the nucleus. It localises to the chromosome. Functionally, core component of nucleosome. Nucleosomes wrap and compact DNA into chromatin, limiting DNA accessibility to the cellular machineries which require DNA as a template. Histones thereby play a central role in transcription regulation, DNA repair, DNA replication and chromosomal stability. DNA accessibility is regulated via a complex set of post-translational modifications of histones, also called histone code, and nucleosome remodeling. The polypeptide is Histone H3.3 (HHT3) (Trichinella pseudospiralis (Parasitic roundworm)).